The following is a 409-amino-acid chain: N-acetylglucosamine-6-phosphate deacetylase (409 aa).

Glu143 provides a ligand contact to a divalent metal cation. Residue 154–155 (AH) participates in substrate binding. Residues His211 and His232 each coordinate a divalent metal cation. Substrate is bound by residues 235–236 (NA), Arg243, and 269–272 (DGTH). The Proton donor/acceptor role is filled by Asp294. 328–330 (LSG) serves as a coordination point for substrate.

It belongs to the metallo-dependent hydrolases superfamily. NagA family. A divalent metal cation serves as cofactor.

The catalysed reaction is N-acetyl-D-glucosamine 6-phosphate + H2O = D-glucosamine 6-phosphate + acetate. Its pathway is amino-sugar metabolism; N-acetylneuraminate degradation. Functionally, hydrolyzes the N-glycolyl group from N-glycolylglucosamine 6-phosphate (GlcNGc-6-P) in the N-glycolylneuraminic acid (Neu5Gc) degradation pathway. Although human is not able to catalyze formation of Neu5Gc due to the inactive CMAHP enzyme, Neu5Gc is present in food and must be degraded. This is N-acetylglucosamine-6-phosphate deacetylase (AMDHD2) from Homo sapiens (Human).